Here is a 163-residue protein sequence, read N- to C-terminus: 3-isopropylmalate dehydratase small subunit (163 aa).

The protein belongs to the LeuD family. LeuD type 2 subfamily. Heterodimer of LeuC and LeuD.

It carries out the reaction (2R,3S)-3-isopropylmalate = (2S)-2-isopropylmalate. The protein operates within amino-acid biosynthesis; L-leucine biosynthesis; L-leucine from 3-methyl-2-oxobutanoate: step 2/4. Catalyzes the isomerization between 2-isopropylmalate and 3-isopropylmalate, via the formation of 2-isopropylmaleate. This Clostridioides difficile (strain 630) (Peptoclostridium difficile) protein is 3-isopropylmalate dehydratase small subunit.